Here is a 240-residue protein sequence, read N- to C-terminus: Protein FANTASTIC FOUR 2 (240 aa).

Disordered regions lie at residues Thr89 to Lys124 and Leu177 to Leu229. In terms of domain architecture, FAF spans Asn117 to Leu171. Residues Glu184–Glu200 show a composition bias toward acidic residues. Residues Gly207–Arg216 show a composition bias toward basic residues. The segment covering Arg217–Lys226 has biased composition (basic and acidic residues).

The protein belongs to the fantastic four family. Expressed in the shoot apex, stamens, carpels and young siliques. Detected in provascular and vascular tissue, and in the center of the vegetative and inflorescence meristems. Expressed in the funiculus. In roots and leaves, predominantly expressed in phloem.

Regulates the size of the shoot meristem by modulating the CLV3-WUS feedback loop. Can repress WUS but is under negative control by CLV3. This chain is Protein FANTASTIC FOUR 2 (FAF2), found in Arabidopsis thaliana (Mouse-ear cress).